A 164-amino-acid polypeptide reads, in one-letter code: FMN reductase (NADH) RutF (164 aa).

This sequence belongs to the non-flavoprotein flavin reductase family. RutF subfamily.

The catalysed reaction is FMNH2 + NAD(+) = FMN + NADH + 2 H(+). In terms of biological role, catalyzes the reduction of FMN to FMNH2 which is used to reduce pyrimidine by RutA via the Rut pathway. This Escherichia coli (strain K12 / MC4100 / BW2952) protein is FMN reductase (NADH) RutF.